The chain runs to 146 residues: Cytochrome c oxidase subunit 5A, mitochondrial (146 aa).

The N-terminal 37 residues, 1–37, are a transit peptide targeting the mitochondrion; that stretch reads MLAAALRRCTAAAAARGLLHPASAPSPAAAVCSIRCY. The short motif at 2–16 is the SIFI-degron element; it reads LAAALRRCTAAAAAR. N6-acetyllysine is present on residues Lys-83 and Lys-109. Position 137 is a phosphothreonine (Thr-137).

Belongs to the cytochrome c oxidase subunit 5A family. In terms of assembly, component of the cytochrome c oxidase (complex IV, CIV), a multisubunit enzyme composed of 14 subunits. The complex is composed of a catalytic core of 3 subunits MT-CO1, MT-CO2 and MT-CO3, encoded in the mitochondrial DNA, and 11 supernumerary subunits COX4I, COX5A, COX5B, COX6A, COX6B, COX6C, COX7A, COX7B, COX7C, COX8 and NDUFA4, which are encoded in the nuclear genome. The complex exists as a monomer or a dimer and forms supercomplexes (SCs) in the inner mitochondrial membrane with NADH-ubiquinone oxidoreductase (complex I, CI) and ubiquinol-cytochrome c oxidoreductase (cytochrome b-c1 complex, complex III, CIII), resulting in different assemblies (supercomplex SCI(1)III(2)IV(1) and megacomplex MCI(2)III(2)IV(2)). Interacts with AFG1L. Interacts with RAB5IF. In terms of processing, in response to mitochondrial stress, the precursor protein is ubiquitinated by the SIFI complex in the cytoplasm before mitochondrial import, leading to its degradation. Within the SIFI complex, UBR4 initiates ubiquitin chain that are further elongated or branched by KCMF1.

The protein localises to the mitochondrion inner membrane. Its pathway is energy metabolism; oxidative phosphorylation. In terms of biological role, component of the cytochrome c oxidase, the last enzyme in the mitochondrial electron transport chain which drives oxidative phosphorylation. The respiratory chain contains 3 multisubunit complexes succinate dehydrogenase (complex II, CII), ubiquinol-cytochrome c oxidoreductase (cytochrome b-c1 complex, complex III, CIII) and cytochrome c oxidase (complex IV, CIV), that cooperate to transfer electrons derived from NADH and succinate to molecular oxygen, creating an electrochemical gradient over the inner membrane that drives transmembrane transport and the ATP synthase. Cytochrome c oxidase is the component of the respiratory chain that catalyzes the reduction of oxygen to water. Electrons originating from reduced cytochrome c in the intermembrane space (IMS) are transferred via the dinuclear copper A center (CU(A)) of subunit 2 and heme A of subunit 1 to the active site in subunit 1, a binuclear center (BNC) formed by heme A3 and copper B (CU(B)). The BNC reduces molecular oxygen to 2 water molecules using 4 electrons from cytochrome c in the IMS and 4 protons from the mitochondrial matrix. This chain is Cytochrome c oxidase subunit 5A, mitochondrial (Cox5a), found in Mus musculus (Mouse).